A 293-amino-acid chain; its full sequence is Urease accessory protein UreD 2 (293 aa).

The protein belongs to the UreD family. As to quaternary structure, ureD, UreF and UreG form a complex that acts as a GTP-hydrolysis-dependent molecular chaperone, activating the urease apoprotein by helping to assemble the nickel containing metallocenter of UreC. The UreE protein probably delivers the nickel.

The protein localises to the cytoplasm. Its function is as follows. Required for maturation of urease via the functional incorporation of the urease nickel metallocenter. This is Urease accessory protein UreD 2 from Streptomyces griseus subsp. griseus (strain JCM 4626 / CBS 651.72 / NBRC 13350 / KCC S-0626 / ISP 5235).